Here is a 451-residue protein sequence, read N- to C-terminus: Uronate isomerase (451 aa).

Belongs to the metallo-dependent hydrolases superfamily. Uronate isomerase family.

It carries out the reaction D-glucuronate = D-fructuronate. It catalyses the reaction aldehydo-D-galacturonate = keto-D-tagaturonate. It functions in the pathway carbohydrate metabolism; pentose and glucuronate interconversion. This Thermotoga neapolitana (strain ATCC 49049 / DSM 4359 / NBRC 107923 / NS-E) protein is Uronate isomerase.